Reading from the N-terminus, the 201-residue chain is Recombination protein RecR (201 aa).

The segment at 57–72 (CKYCSNFGNKDECDIC) adopts a C4-type zinc-finger fold. The region spanning 80-176 (TKLMIVTTNE…QIYRIGFGIP (97 aa)) is the Toprim domain.

It belongs to the RecR family.

May play a role in DNA repair. It seems to be involved in an RecBC-independent recombinational process of DNA repair. It may act with RecF and RecO. This chain is Recombination protein RecR, found in Ureaplasma urealyticum serovar 10 (strain ATCC 33699 / Western).